The primary structure comprises 293 residues: Acetyl-coenzyme A carboxylase carboxyl transferase subunit beta (293 aa).

The 265-residue stretch at 29 to 293 (LWSKCPECGL…GCRPMEITSA (265 aa)) folds into the CoA carboxyltransferase N-terminal domain. Residues C33, C36, C52, and C55 each contribute to the Zn(2+) site. A C4-type zinc finger spans residues 33-55 (CPECGLVVYVKDLKGNASVCAGC).

Belongs to the AccD/PCCB family. As to quaternary structure, acetyl-CoA carboxylase is a heterohexamer composed of biotin carboxyl carrier protein (AccB), biotin carboxylase (AccC) and two subunits each of ACCase subunit alpha (AccA) and ACCase subunit beta (AccD). The cofactor is Zn(2+).

The protein localises to the cytoplasm. The enzyme catalyses N(6)-carboxybiotinyl-L-lysyl-[protein] + acetyl-CoA = N(6)-biotinyl-L-lysyl-[protein] + malonyl-CoA. The protein operates within lipid metabolism; malonyl-CoA biosynthesis; malonyl-CoA from acetyl-CoA: step 1/1. Component of the acetyl coenzyme A carboxylase (ACC) complex. Biotin carboxylase (BC) catalyzes the carboxylation of biotin on its carrier protein (BCCP) and then the CO(2) group is transferred by the transcarboxylase to acetyl-CoA to form malonyl-CoA. This is Acetyl-coenzyme A carboxylase carboxyl transferase subunit beta from Parasynechococcus marenigrum (strain WH8102).